The primary structure comprises 339 residues: Heat-inducible transcription repressor HrcA (339 aa).

Belongs to the HrcA family.

Negative regulator of class I heat shock genes (grpE-dnaK-dnaJ and groELS operons). Prevents heat-shock induction of these operons. The sequence is that of Heat-inducible transcription repressor HrcA from Thermotoga neapolitana (strain ATCC 49049 / DSM 4359 / NBRC 107923 / NS-E).